The following is a 102-amino-acid chain: Small ribosomal subunit protein uS10 (102 aa).

It belongs to the universal ribosomal protein uS10 family. In terms of assembly, part of the 30S ribosomal subunit.

Its function is as follows. Involved in the binding of tRNA to the ribosomes. This is Small ribosomal subunit protein uS10 from Exiguobacterium sibiricum (strain DSM 17290 / CCUG 55495 / CIP 109462 / JCM 13490 / 255-15).